The primary structure comprises 366 residues: UDP-N-acetylglucosamine--N-acetylmuramyl-(pentapeptide) pyrophosphoryl-undecaprenol N-acetylglucosamine transferase (366 aa).

Residues T22 to G24, N134, R170, S198, I253, and Q298 contribute to the UDP-N-acetyl-alpha-D-glucosamine site.

Belongs to the glycosyltransferase 28 family. MurG subfamily.

The protein resides in the cell inner membrane. It carries out the reaction di-trans,octa-cis-undecaprenyl diphospho-N-acetyl-alpha-D-muramoyl-L-alanyl-D-glutamyl-meso-2,6-diaminopimeloyl-D-alanyl-D-alanine + UDP-N-acetyl-alpha-D-glucosamine = di-trans,octa-cis-undecaprenyl diphospho-[N-acetyl-alpha-D-glucosaminyl-(1-&gt;4)]-N-acetyl-alpha-D-muramoyl-L-alanyl-D-glutamyl-meso-2,6-diaminopimeloyl-D-alanyl-D-alanine + UDP + H(+). The protein operates within cell wall biogenesis; peptidoglycan biosynthesis. Its function is as follows. Cell wall formation. Catalyzes the transfer of a GlcNAc subunit on undecaprenyl-pyrophosphoryl-MurNAc-pentapeptide (lipid intermediate I) to form undecaprenyl-pyrophosphoryl-MurNAc-(pentapeptide)GlcNAc (lipid intermediate II). This chain is UDP-N-acetylglucosamine--N-acetylmuramyl-(pentapeptide) pyrophosphoryl-undecaprenol N-acetylglucosamine transferase, found in Xylella fastidiosa (strain M12).